We begin with the raw amino-acid sequence, 463 residues long: Elongation factor 1-alpha (463 aa).

Position 2 is a n,N,N-trimethylglycine (G2). Position 3 is an N6,N6-dimethyllysine; alternate (K3). K3 bears the N6-methyllysine; alternate mark. In terms of domain architecture, tr-type G spans 5–239 (KNHVNVVVIG…DAIEPPSRPT (235 aa)). The G1 stretch occupies residues 14 to 21 (GHVDSGKS). 14–21 (GHVDSGKS) provides a ligand contact to GTP. K30 is subject to N6-methyllysine. The interval 70–74 (GITID) is G2. An N6,N6,N6-trimethyllysine modification is found at K79. Residues 91–94 (DAPG) are G3. Residues 91–95 (DAPGH) and 153–156 (NKMD) each bind GTP. The interval 153-156 (NKMD) is G4. The segment at 191 to 193 (SGW) is G5. N6,N6-dimethyllysine; alternate is present on K315. K315 carries the post-translational modification N6-methyllysine; alternate. K389 carries the post-translational modification N6-methyllysine.

The protein belongs to the TRAFAC class translation factor GTPase superfamily. Classic translation factor GTPase family. EF-Tu/EF-1A subfamily.

Its subcellular location is the cytoplasm. This protein promotes the GTP-dependent binding of aminoacyl-tRNA to the A-site of ribosomes during protein biosynthesis. The sequence is that of Elongation factor 1-alpha (TEF) from Puccinia graminis (Black stem rust fungus).